A 203-amino-acid polypeptide reads, in one-letter code: ATP-dependent Clp protease proteolytic subunit (203 aa).

Serine 100 acts as the Nucleophile in catalysis. Histidine 125 is a catalytic residue.

Belongs to the peptidase S14 family. Component of the chloroplastic Clp protease core complex.

The protein resides in the plastid. It is found in the chloroplast stroma. The enzyme catalyses Hydrolysis of proteins to small peptides in the presence of ATP and magnesium. alpha-casein is the usual test substrate. In the absence of ATP, only oligopeptides shorter than five residues are hydrolyzed (such as succinyl-Leu-Tyr-|-NHMec, and Leu-Tyr-Leu-|-Tyr-Trp, in which cleavage of the -Tyr-|-Leu- and -Tyr-|-Trp bonds also occurs).. Its function is as follows. Cleaves peptides in various proteins in a process that requires ATP hydrolysis. Has a chymotrypsin-like activity. Plays a major role in the degradation of misfolded proteins. The chain is ATP-dependent Clp protease proteolytic subunit from Dioscorea elephantipes (Elephant's foot yam).